The chain runs to 41 residues: Photosystem II reaction center protein X (41 aa).

At 2–6 (TITPS) the chain is on the lumenal side. The chain crosses the membrane as a helical span at residues 7 to 29 (LKGFFIGLLSGAVVLGLTFAVLI). Residues 30-41 (AISQIDKVQRSL) are Cytoplasmic-facing.

Belongs to the PsbX family. Type 1 subfamily. As to quaternary structure, PSII is composed of 1 copy each of membrane proteins PsbA, PsbB, PsbC, PsbD, PsbE, PsbF, PsbH, PsbI, PsbJ, PsbK, PsbL, PsbM, PsbT, PsbX, PsbY, PsbZ, Psb30/Ycf12, peripheral proteins PsbO, CyanoQ (PsbQ), PsbU, PsbV and a large number of cofactors. It forms dimeric complexes. Part of a photosystem II (PSII) assembly intermediate complex PSII-I; crystallized from a strain deleted of psbJ, it forms monomeric PSII before addition of the oxygen evolving complex. PSII-I includes 3 assembly factors not found in mature PSII (Psb27, Psb28 and Psb34). PSII binds multiple chlorophylls, carotenoids and specific lipids. serves as cofactor.

Its subcellular location is the cellular thylakoid membrane. Functionally, involved in the binding and/or turnover of quinones at the Q(B) site of photosystem II (PSII). PSII is a light-driven water plastoquinone oxidoreductase, using light energy to abstract electrons from H(2)O, generating a proton gradient subsequently used for ATP formation. This Thermosynechococcus vestitus (strain NIES-2133 / IAM M-273 / BP-1) protein is Photosystem II reaction center protein X.